A 590-amino-acid chain; its full sequence is Leucine-rich repeat transmembrane neuronal protein 4 (590 aa).

A signal peptide spans 1 to 30; sequence MGFRLITQLKGMSVFLVLFPTLLLVMLTGA. The LRRNT domain maps to 31–61; the sequence is QRACPKNCRCDGKIVYCESHAFADIPENISG. Over 31 to 424 the chain is Extracellular; the sequence is QRACPKNCRC…HEYEHVSFHK (394 aa). The N-linked (GlcNAc...) asparagine glycan is linked to asparagine 58. LRR repeat units follow at residues 62-83, 86-107, 110-131, 134-155, 158-179, 182-203, 206-226, 230-251, 254-275, and 278-299; these read GSQG…QFAG, QLIW…AFQG, RLKE…TFHP, NLRN…QFKG, KLII…VFQD, NLDF…AFAG, KLKE…AHFP, NLRS…LTWT, SLHT…TFKC, and NLQK…TVNA. An N-linked (GlcNAc...) asparagine glycan is attached at asparagine 126. Asparagine 291 is a glycosylation site (N-linked (GlcNAc...) asparagine). Positions 311 to 362 constitute an LRRCT domain; it reads NMWECSRSICPLFYWLKNFKGNKESTMICAGPKHIQGEKVSDAVETYNICSD. A helical membrane pass occupies residues 425 to 445; sequence IIAGSVALFLSVAMILLVIYV. The Cytoplasmic segment spans residues 446–590; that stretch reads SWKRYPASMK…PAIYLERITN (145 aa).

This sequence belongs to the LRRTM family. In terms of assembly, peripherally associated with AMPAR complex. AMPAR complex consists of an inner core made of 4 pore-forming GluA/GRIA proteins (GRIA1, GRIA2, GRIA3 and GRIA4) and 4 major auxiliary subunits arranged in a twofold symmetry. One of the two pairs of distinct binding sites is occupied either by CNIH2, CNIH3 or CACNG2, CACNG3. The other harbors CACNG2, CACNG3, CACNG4, CACNG8 or GSG1L. This inner core of AMPAR complex is complemented by outer core constituents binding directly to the GluA/GRIA proteins at sites distinct from the interaction sites of the inner core constituents. Outer core constituents include at least PRRT1, PRRT2, CKAMP44/SHISA9, FRRS1L and NRN1. The proteins of the inner and outer core serve as a platform for other, more peripherally associated AMPAR constituents, including LRRTM4. Alone or in combination, these auxiliary subunits control the gating and pharmacology of the AMPAR complex and profoundly impact their biogenesis and protein processing. As to expression, predominantly in the brain (at protein level). Also expressed in the cerebellum and other tissues.

It localises to the cell membrane. It is found in the postsynaptic cell membrane. Its function is as follows. May play a role in the development and maintenance of the vertebrate nervous system. Exhibits strong synaptogenic activity, restricted to excitatory presynaptic differentiation. The sequence is that of Leucine-rich repeat transmembrane neuronal protein 4 (Lrrtm4) from Mus musculus (Mouse).